Consider the following 140-residue polypeptide: Large ribosomal subunit protein uL24 (140 aa).

Belongs to the universal ribosomal protein uL24 family. As to quaternary structure, part of the 50S ribosomal subunit.

One of two assembly initiator proteins, it binds directly to the 5'-end of the 23S rRNA, where it nucleates assembly of the 50S subunit. Functionally, located at the polypeptide exit tunnel on the outside of the subunit. The polypeptide is Large ribosomal subunit protein uL24 (Nanoarchaeum equitans (strain Kin4-M)).